We begin with the raw amino-acid sequence, 353 residues long: Photosystem II D2 protein (353 aa).

N-acetylthreonine is present on Thr-2. Residue Thr-2 is modified to Phosphothreonine. A helical transmembrane segment spans residues 41–61 (CAYFALGGWFTGTTFVTSWYT). Residue His-118 participates in chlorophyll a binding. The chain crosses the membrane as a helical span at residues 125–141 (GFMLRQFELARSVQLRP). The pheophytin a site is built by Gln-130 and Asn-143. A helical transmembrane segment spans residues 153–166 (VFVSVFLIYPLGQS). Chlorophyll a is bound at residue His-198. A helical membrane pass occupies residues 208 to 228 (AALLCAIHGATVENLYFEDGD). Residues His-215 and Phe-262 each coordinate a plastoquinone. Position 215 (His-215) interacts with Fe cation. His-269 lines the Fe cation pocket. The chain crosses the membrane as a helical span at residues 279-295 (GLWMSALGVVGLALNLR).

It belongs to the reaction center PufL/M/PsbA/D family. PSII is composed of 1 copy each of membrane proteins PsbA, PsbB, PsbC, PsbD, PsbE, PsbF, PsbH, PsbI, PsbJ, PsbK, PsbL, PsbM, PsbT, PsbX, PsbY, PsbZ, Psb30/Ycf12, at least 3 peripheral proteins of the oxygen-evolving complex and a large number of cofactors. It forms dimeric complexes. It depends on The D1/D2 heterodimer binds P680, chlorophylls that are the primary electron donor of PSII, and subsequent electron acceptors. It shares a non-heme iron and each subunit binds pheophytin, quinone, additional chlorophylls, carotenoids and lipids. There is also a Cl(-1) ion associated with D1 and D2, which is required for oxygen evolution. The PSII complex binds additional chlorophylls, carotenoids and specific lipids. as a cofactor.

The protein localises to the plastid. The protein resides in the chloroplast thylakoid membrane. The catalysed reaction is 2 a plastoquinone + 4 hnu + 2 H2O = 2 a plastoquinol + O2. In terms of biological role, photosystem II (PSII) is a light-driven water:plastoquinone oxidoreductase that uses light energy to abstract electrons from H(2)O, generating O(2) and a proton gradient subsequently used for ATP formation. It consists of a core antenna complex that captures photons, and an electron transfer chain that converts photonic excitation into a charge separation. The D1/D2 (PsbA/PsbD) reaction center heterodimer binds P680, the primary electron donor of PSII as well as several subsequent electron acceptors. D2 is needed for assembly of a stable PSII complex. The sequence is that of Photosystem II D2 protein from Panax ginseng (Korean ginseng).